The following is a 205-amino-acid chain: HTH-type transcriptional repressor KstR2 (205 aa).

The HTH tetR-type domain occupies Ala10–Leu70. A DNA-binding region (H-T-H motif) is located at residues Thr33 to Phe52.

As to quaternary structure, homodimer.

Functionally, controls the expression of a small regulon that may play a role in the utilization of cholesterol. This is HTH-type transcriptional repressor KstR2 (kstR2) from Mycolicibacterium smegmatis (strain ATCC 700084 / mc(2)155) (Mycobacterium smegmatis).